Here is a 77-residue protein sequence, read N- to C-terminus: uncharacterized protein (77 aa).

2 consecutive 4Fe-4S ferredoxin-type domains span residues 3 to 32 (VEII…WTKD) and 36 to 65 (KYYA…IKVV). Residues cysteine 12, cysteine 15, cysteine 18, cysteine 22, cysteine 45, cysteine 48, cysteine 51, and cysteine 55 each contribute to the [4Fe-4S] cluster site.

[4Fe-4S] cluster serves as cofactor.

In terms of biological role, ferredoxins are iron-sulfur proteins that transfer electrons probably in the CO-dehydrogenase complex. This is an uncharacterized protein from Methanocaldococcus jannaschii (strain ATCC 43067 / DSM 2661 / JAL-1 / JCM 10045 / NBRC 100440) (Methanococcus jannaschii).